Consider the following 206-residue polypeptide: dTTP/UTP pyrophosphatase (206 aa).

Asp-79 functions as the Proton acceptor in the catalytic mechanism.

It belongs to the Maf family. YhdE subfamily. A divalent metal cation serves as cofactor.

Its subcellular location is the cytoplasm. The catalysed reaction is dTTP + H2O = dTMP + diphosphate + H(+). The enzyme catalyses UTP + H2O = UMP + diphosphate + H(+). Functionally, nucleoside triphosphate pyrophosphatase that hydrolyzes dTTP and UTP. May have a dual role in cell division arrest and in preventing the incorporation of modified nucleotides into cellular nucleic acids. The protein is dTTP/UTP pyrophosphatase of Rhizobium johnstonii (strain DSM 114642 / LMG 32736 / 3841) (Rhizobium leguminosarum bv. viciae).